Consider the following 422-residue polypeptide: UDP-N-acetylglucosamine 1-carboxyvinyltransferase (422 aa).

Phosphoenolpyruvate is bound at residue 22–23 (KN). R93 contributes to the UDP-N-acetyl-alpha-D-glucosamine binding site. The active-site Proton donor is the C117. C117 is subject to 2-(S-cysteinyl)pyruvic acid O-phosphothioketal. UDP-N-acetyl-alpha-D-glucosamine contacts are provided by residues 122 to 126 (RPVDQ), D305, and I327.

Belongs to the EPSP synthase family. MurA subfamily.

It is found in the cytoplasm. The enzyme catalyses phosphoenolpyruvate + UDP-N-acetyl-alpha-D-glucosamine = UDP-N-acetyl-3-O-(1-carboxyvinyl)-alpha-D-glucosamine + phosphate. Its pathway is cell wall biogenesis; peptidoglycan biosynthesis. Functionally, cell wall formation. Adds enolpyruvyl to UDP-N-acetylglucosamine. This chain is UDP-N-acetylglucosamine 1-carboxyvinyltransferase, found in Bordetella parapertussis (strain 12822 / ATCC BAA-587 / NCTC 13253).